A 450-amino-acid polypeptide reads, in one-letter code: UDP-N-acetylmuramoylalanine--D-glutamate ligase (450 aa).

Gly119 to Thr125 contacts ATP.

Belongs to the MurCDEF family.

The protein localises to the cytoplasm. The enzyme catalyses UDP-N-acetyl-alpha-D-muramoyl-L-alanine + D-glutamate + ATP = UDP-N-acetyl-alpha-D-muramoyl-L-alanyl-D-glutamate + ADP + phosphate + H(+). The protein operates within cell wall biogenesis; peptidoglycan biosynthesis. Cell wall formation. Catalyzes the addition of glutamate to the nucleotide precursor UDP-N-acetylmuramoyl-L-alanine (UMA). The protein is UDP-N-acetylmuramoylalanine--D-glutamate ligase of Streptococcus gordonii (strain Challis / ATCC 35105 / BCRC 15272 / CH1 / DL1 / V288).